Reading from the N-terminus, the 514-residue chain is L-carnitine/gamma-butyrobetaine antiporter (514 aa).

Residues 1-11 (MSKDNKKAGIE) are Cytoplasmic-facing. A helical membrane pass occupies residues 12–30 (PKVFFPPLIIVGILCWLTV). The Periplasmic segment spans residues 31–42 (RDLDASNEVINA). A helical transmembrane segment spans residues 43–68 (VFSYVTNVWGWAFEWYMVIMFGGWFW). The Cytoplasmic portion of the chain corresponds to 69–91 (LVFGRYAKKRLGDEKPEFSTASW). Residues 92-112 (IFMMFASCTSAAVLFWGSIEI) form a helical membrane-spanning segment. Residues 113–131 (YYYISSPPFGMEGYSAPAK) are Periplasmic-facing. A helical transmembrane segment spans residues 132 to 154 (EIGLAYSLFHWGPLPWATYSFLS). The Cytoplasmic segment spans residues 155 to 185 (VAFAYFFFVRKMEVIRPSSTLTPLVGEKHVN). A helical membrane pass occupies residues 186-216 (GLFGTVVDNFYLVALILAMGTSLGLATPLVT). Residues 217–230 (ECIQYLFGIPHTLQ) lie on the Periplasmic side of the membrane. Residues 231-249 (LDAIIISCWILLNAICVAF) form a helical membrane-spanning segment. The Cytoplasmic segment spans residues 250-251 (GL). Residues 252-277 (QKGVKIASDVRTYLSFLMLGWVFIVG) form a helical membrane-spanning segment. Residues 278–311 (GASFIVNYFTDSVGTLLMYMPRMLFYTDPIGKGG) lie on the Periplasmic side of the membrane. Residues 312-335 (FPQAWTVFYWAWWVIYAIQMSIFL) form a helical membrane-spanning segment. The Cytoplasmic portion of the chain corresponds to 336–347 (ARISKGRTVREL). Residues 348–369 (CLGMVSGLTAGTWLIWTILGGN) form a helical membrane-spanning segment. Over 370 to 404 (TLQLIDQNILNIPQLIDQYGVPRAIIETWAALPLS) the chain is Periplasmic. Residues 405 to 434 (TATMWGFFILCFIATVTLINACSYTLAMST) traverse the membrane as a helical segment. Residues 435-445 (CRSMKEGAEPP) are Cytoplasmic-facing. Residues 446-464 (LLVRIGWSVLVGIIGIILL) form a helical membrane-spanning segment. At 465 to 468 (ALGG) the chain is on the periplasmic side. A helical membrane pass occupies residues 469 to 492 (LKPIQTAIIAGGCPLFFVNIMVTL). Over 493 to 514 (SFIKDAKVHWKDCSPYTQKMTH) the chain is Cytoplasmic.

Belongs to the BCCT transporter (TC 2.A.15) family. CaiT subfamily. As to quaternary structure, homotrimer.

It is found in the cell inner membrane. The enzyme catalyses 4-(trimethylamino)butanoate(in) + (R)-carnitine(out) = 4-(trimethylamino)butanoate(out) + (R)-carnitine(in). Its pathway is amine and polyamine metabolism; carnitine metabolism. Its function is as follows. Catalyzes the exchange of L-carnitine for gamma-butyrobetaine. The protein is L-carnitine/gamma-butyrobetaine antiporter of Proteus mirabilis (strain HI4320).